A 50-amino-acid polypeptide reads, in one-letter code: Large ribosomal subunit protein bL33B (50 aa).

The protein belongs to the bacterial ribosomal protein bL33 family.

This Mycoplasmopsis agalactiae (strain NCTC 10123 / CIP 59.7 / PG2) (Mycoplasma agalactiae) protein is Large ribosomal subunit protein bL33B.